A 154-amino-acid polypeptide reads, in one-letter code: Protein X (154 aa).

Residues 68 to 117 (PCALRFTSARRMETTVNAHQVLPKVLHKRTLGLSAMSTTDLEAYFKDCLF) are mitochondrial targeting sequence.

It belongs to the orthohepadnavirus protein X family. As to quaternary structure, may form homodimer. May interact with host CEBPA, CFLAR, CREB1, DDB1, E4F1, HBXIP, HSPD1/HSP60, NFKBIA, POLR2E and SMAD4. Interacts with host SMC5-SMC6 complex and induces its degradation. Interacts with host TRPC4AP; leading to prevent ubiquitination of TRPC4AP. Interacts with host PLSCR1; this interaction promotes ubiquitination and degradation of HBx and impairs HBx-mediated cell proliferation. A fraction may be phosphorylated in insect cells and HepG2 cells, a human hepatoblastoma cell line. Phosphorylated in vitro by host protein kinase C or mitogen-activated protein kinase. N-acetylated in insect cells.

It localises to the host cytoplasm. Its subcellular location is the host nucleus. It is found in the host mitochondrion. Its function is as follows. Multifunctional protein that plays a role in silencing host antiviral defenses and promoting viral transcription. Does not seem to be essential for HBV infection. May be directly involved in development of cirrhosis and liver cancer (hepatocellular carcinoma). Most of cytosolic activities involve modulation of cytosolic calcium. The effect on apoptosis is controversial depending on the cell types in which the studies have been conducted. May induce apoptosis by localizing in mitochondria and causing loss of mitochondrial membrane potential. May also modulate apoptosis by binding host CFLAR, a key regulator of the death-inducing signaling complex (DISC). Promotes viral transcription by using the host E3 ubiquitin ligase DDB1 to target the SMC5-SMC6 complex to proteasomal degradation. This host complex would otherwise bind to viral episomal DNA, and prevents its transcription. Moderately stimulates transcription of many different viral and cellular transcription elements. Promoters and enhancers stimulated by HBx contain DNA binding sites for NF-kappa-B, AP-1, AP-2, c-EBP, ATF/CREB, or the calcium-activated factor NF-AT. This chain is Protein X, found in Hepatitis B virus genotype C subtype adr (isolate Japan/Nishioka/1983) (HBV-C).